We begin with the raw amino-acid sequence, 574 residues long: Developmental and secondary metabolism regulator veA (574 aa).

Disordered regions lie at residues 1 to 22 (MATRAPLAPPPNETEASVSRIT), 39 to 60 (ERARACGAGAKSSADRRPVDPP), 255 to 500 (RSSD…GAGK), and 513 to 540 (RSYEDSFGHDDRPLYNGMRPDTESYPRR). The Velvet domain occupies 25 to 230 (GKKLTYKLNV…AEQGCRVRIR (206 aa)). The Nuclear localization signal motif lies at 39–44 (ERARAC). 2 stretches are compositionally biased toward pro residues: residues 314 to 323 (RPLPPAPGPA) and 330 to 341 (PAPPAPPAPPSH). Composition is skewed to polar residues over residues 343–353 (PGYQSHLSFGS), 385–394 (HARNPSTSAE), 406–415 (RMSTERSSYP), and 448–458 (VAQSAAPRSQT). A PEST region spans residues 457–501 (QTPSSSLVPSLPPLKALSGDYPNNLSQSSSSTSQSPSHDLGAGKK). Composition is skewed to low complexity over residues 459–474 (PSSSLVPSLPPLKALS) and 482–493 (SQSSSSTSQSPS). Positions 513 to 525 (RSYEDSFGHDDRP) are enriched in basic and acidic residues.

It belongs to the velvet family. VeA subfamily. As to quaternary structure, component of the heterotrimeric velvet complex composed of laeA, veA and velB; VeA acting as a bridging protein between laeA and velB.

It localises to the nucleus. The protein localises to the cytoplasm. Component of the velvet transcription factor complex that controls sexual/asexual developmental ratio in response to light, promoting sexual development in the darkness while stimulating asexual sporulation under illumination. The velvet complex hat acts as a global regulator for secondary metabolite gene expression. Controls the expression of the penicillin gene cluster. The polypeptide is Developmental and secondary metabolism regulator veA (Aspergillus oryzae (strain ATCC 42149 / RIB 40) (Yellow koji mold)).